Here is a 668-residue protein sequence, read N- to C-terminus: Phosphatidylinositol 4-phosphate 5-kinase type-1 gamma (668 aa).

Residues 45–67 (SMTAQPGPGHGKKLGHRGVDASG) form a disordered region. Positions 75–443 (TSSTLKGAIQ…RFFKFMSNTV (369 aa)) constitute a PIPK domain. An N6-acetyllysine mark is found at lysine 265 and lysine 268. Asymmetric dimethylarginine; alternate is present on arginine 459. Arginine 459 bears the Omega-N-methylarginine; alternate mark. The span at 526–535 (TTLSSTSLSI) shows a compositional bias: low complexity. Disordered regions lie at residues 526–578 (TTLS…ITVQ) and 593–642 (EDAG…YFPT). Phosphoserine is present on serine 555. Tyrosine 639 carries the phosphotyrosine; by EGFR modification. Residues 641 to 668 (PTDERSWVYSPLHYSAQAPPASDGESDT) form a mediates interaction with TLN2 region. Position 649 is a phosphotyrosine; by CSK (tyrosine 649). A Phosphoserine; by CDK5, MAPK1 and CDK1 modification is found at serine 650. 2 positions are modified to phosphoserine: serine 662 and serine 666. Position 668 is a phosphothreonine (threonine 668).

In terms of assembly, interacts with TLN1. Interacts with TLN2; interaction stimulates 1-phosphatidylinositol-4-phosphate 5-kinase activity. May compete with beta-integrins for the same binding site on TLN1 and TLN2. Interacts with ARF6; interaction stimulates 1-phosphatidylinositol-4-phosphate 5-kinase activity. Interacts with AP2B1. Interacts with AP2M1; phosphorylation of PIP5K1C by CSK disrupts the interaction; clathrin competes with PIP5K1C. Interacts with CDH1. Interacts with CSK. Interacts with PLCG1; interaction is abolished upon EGF stimulation. Interacts with LAPTM4B; promotes SNX5 association with LAPTM4B; kinase activity of PIP5K1C is required; interaction is regulated by phosphatidylinositol 4,5-bisphosphate generated by PIP5K1C. Post-translationally, phosphorylation on Ser-650 negatively regulates binding to TLN2 and is strongly stimulated in mitosis. Phosphorylation on Tyr-649 is necessary for targeting to focal adhesions. Phosphorylation on Ser-650 and Tyr-649 are mutually exclusive. Phosphorylated by SYK and CSK. Tyrosine phosphorylation is enhanced by PTK2 signaling. Phosphorylated at Tyr-639 upon EGF stimulation. Some studies suggest that phosphorylation on Tyr-649 enhances binding to tailins (TLN1 and TLN2). According to PubMed:15738269 phosphorylation at Tyr-649 does not directly enhance binding to tailins (TLN1 and TLN2) but may act indirectly by inhibiting phosphorylation at Ser-650. In terms of processing, acetylation at Lys-265 and Lys-268 seems to decrease lipid 1-phosphatidylinositol-4-phosphate 5-kinase activity. Deacetylation of these sites by SIRT1 positively regulates the exocytosis of TSH-containing granules from pituitary cells. As to expression, isoform 1 is strongly expressed in brain and also detected in heart and lung. In terms of tissue distribution, isoform 2 is strongly expressed in pancreas and liver and in lesser quantities in brain, heart, lung and kidney. Isoform 3 is detected in large amounts in heart and large intestine, is also present in lung, pancreas and thyroid, and to a lesser extent in brain, stomach and kidney.

Its subcellular location is the cell membrane. The protein resides in the endomembrane system. It is found in the cytoplasm. It localises to the cell junction. The protein localises to the focal adhesion. Its subcellular location is the adherens junction. The protein resides in the cell projection. It is found in the ruffle membrane. It localises to the phagocytic cup. The protein localises to the uropodium. Its subcellular location is the nucleus. The catalysed reaction is a 1,2-diacyl-sn-glycero-3-phospho-(1D-myo-inositol 4-phosphate) + ATP = a 1,2-diacyl-sn-glycero-3-phospho-(1D-myo-inositol-4,5-bisphosphate) + ADP + H(+). It carries out the reaction 1-octadecanoyl-2-(5Z,8Z,11Z,14Z)-eicosatetraenoyl-sn-glycero-3-phospho-1D-myo-inositol 4-phosphate + ATP = 1-octadecanoyl-2-(5Z,8Z,11Z,14Z)-eicosatetraenoyl-sn-glycero-3-phospho-1D-myo-inositol 4,5-bisphosphate + ADP + H(+). The enzyme catalyses 1-octadecanoyl-2-(9Z)-octadecenoyl-sn-glycero-3-phospho-1D-myo-inositol 4-phosphate + ATP = 1-octadecanoyl-2-(9Z)-octadecenoyl-sn-glycero-3-phospho-1D-myo-inositol 4,5-bisphosphate + ADP + H(+). It catalyses the reaction 1-octadecanoyl-2-(9Z)-octadecenoyl-sn-glycero-3-phospho-1D-myo-inositol + ATP = 1-octadecanoyl-2-(9Z)-octadecenoyl-sn-glycero-3-phospho-1D-myo-inositol 5-phosphate + ADP + H(+). The catalysed reaction is 1-octadecanoyl-2-(9Z,12Z)-octadecadienoyl-sn-glycero-3-phospho-1D-myo-inositol + ATP = 1-octadecanoyl-2-(9Z,12Z)-octadecadienoyl-sn-glycero-3-phospho-1D-myo-inositol 5-phosphate + ADP + H(+). It carries out the reaction 1-octadecanoyl-2-(5Z,8Z,11Z,14Z-eicosatetraenoyl)-sn-glycero-3-phospho-(1D-myo-inositol) + ATP = 1-octadecanoyl-2-(5Z,8Z,11Z,14Z)-eicosatetraenoyl-sn-glycero-3-phospho-1D-myo-inositol 5-phosphate + ADP + H(+). The enzyme catalyses 1,2-di-(9Z,12Z)-octadecadienoyl-sn-glycero-3-phospho-1D-myo-inositol + ATP = 1,2-di(9Z,12Z)-octadecadienoyl-sn-glycero-3-phospho-1D-myo-inositol 5-phosphate + ADP + H(+). Catalyzes the phosphorylation of phosphatidylinositol 4-phosphate (PtdIns(4)P/PI4P) to form phosphatidylinositol 4,5-bisphosphate (PtdIns(4,5)P2/PIP2), a lipid second messenger that regulates several cellular processes such as signal transduction, vesicle trafficking, actin cytoskeleton dynamics, cell adhesion, and cell motility. PtdIns(4,5)P2 can directly act as a second messenger or can be utilized as a precursor to generate other second messengers: inositol 1,4,5-trisphosphate (IP3), diacylglycerol (DAG) or phosphatidylinositol-3,4,5-trisphosphate (PtdIns(3,4,5)P3/PIP3). PIP5K1A-mediated phosphorylation of PtdIns(4)P is the predominant pathway for PtdIns(4,5)P2 synthesis. Together with PIP5K1A, is required for phagocytosis, both enzymes regulating different types of actin remodeling at sequential steps. Promotes particle attachment by generating the pool of PtdIns(4,5)P2 that induces controlled actin depolymerization to facilitate Fc-gamma-R clustering. Mediates RAC1-dependent reorganization of actin filaments. Required for synaptic vesicle transport. Controls the plasma membrane pool of PtdIns(4,5)P2 implicated in synaptic vesicle endocytosis and exocytosis. Plays a role in endocytosis mediated by clathrin and AP-2 (adaptor protein complex 2). Required for clathrin-coated pits assembly at the synapse. Participates in cell junction assembly. Modulates adherens junctions formation by facilitating CDH1/cadherin trafficking. Required for focal adhesion dynamics. Modulates the targeting of talins (TLN1 and TLN2) to the plasma membrane and their efficient assembly into focal adhesions. Regulates the interaction between talins (TLN1 and TLN2) and beta-integrins. Required for uropodium formation and retraction of the cell rear during directed migration. Has a role in growth factor-stimulated directional cell migration and adhesion. Required for talin assembly into nascent adhesions forming at the leading edge toward the direction of the growth factor. Negative regulator of T-cell activation and adhesion. Negatively regulates integrin alpha-L/beta-2 (LFA-1) polarization and adhesion induced by T-cell receptor. Together with PIP5K1A has a role during embryogenesis and together with PIP5K1B may have a role immediately after birth. This chain is Phosphatidylinositol 4-phosphate 5-kinase type-1 gamma, found in Homo sapiens (Human).